Consider the following 67-residue polypeptide: uncharacterized protein (67 aa).

2 helical membrane passes run 8–28 (MWFA…IYLS) and 41–61 (ISSF…VVVF).

Its subcellular location is the cell membrane. This is an uncharacterized protein from Bacillus subtilis (strain 168).